The primary structure comprises 656 residues: DNA ligase (656 aa).

NAD(+) contacts are provided by residues 32 to 36, 81 to 82, and Glu-112; these read DEEYD and SM. Residue Lys-114 is the N6-AMP-lysine intermediate of the active site. NAD(+) is bound by residues Arg-135, Glu-169, Lys-284, and Lys-308. The Zn(2+) site is built by Cys-402, Cys-405, Cys-418, and Cys-423. The BRCT domain occupies 577-656; it reads VQKTPFTGKT…DMWKMLKEGK (80 aa).

It belongs to the NAD-dependent DNA ligase family. LigA subfamily. Mg(2+) serves as cofactor. Requires Mn(2+) as cofactor.

The enzyme catalyses NAD(+) + (deoxyribonucleotide)n-3'-hydroxyl + 5'-phospho-(deoxyribonucleotide)m = (deoxyribonucleotide)n+m + AMP + beta-nicotinamide D-nucleotide.. DNA ligase that catalyzes the formation of phosphodiester linkages between 5'-phosphoryl and 3'-hydroxyl groups in double-stranded DNA using NAD as a coenzyme and as the energy source for the reaction. It is essential for DNA replication and repair of damaged DNA. This Nautilia profundicola (strain ATCC BAA-1463 / DSM 18972 / AmH) protein is DNA ligase.